Reading from the N-terminus, the 344-residue chain is GDSL esterase/lipase At1g73610 (344 aa).

The first 24 residues, 1 to 24, serve as a signal peptide directing secretion; the sequence is MNCLMFFKMLLAFSFISLFYVGNA. N-linked (GlcNAc...) asparagine glycosylation is present at N30. S42 serves as the catalytic Nucleophile. Active-site residues include D319 and H322.

It belongs to the 'GDSL' lipolytic enzyme family.

The protein localises to the secreted. The protein is GDSL esterase/lipase At1g73610 of Arabidopsis thaliana (Mouse-ear cress).